The following is a 566-amino-acid chain: Cytochrome c oxidase subunit 1 (566 aa).

The next 7 membrane-spanning stretches (helical) occupy residues 29-49 (IGVL…AFTV), 97-117 (VMIT…ALFG), 141-161 (LSYW…FAPG), 189-209 (LAIF…INMI), 227-247 (LFAW…PVLA), 278-298 (ILWF…FGIV), and 310-330 (IFGY…GFVV). His102 contributes to the Fe(II)-heme a binding site. Cu cation is bound by residues His284 and Tyr288. Residues 284 to 288 (HPEVY) constitute a cross-link (1'-histidyl-3'-tyrosine (His-Tyr)). Cu cation contacts are provided by His333 and His334. 2 helical membrane passes run 348-368 (FMMA…SWIA) and 381-401 (MLWA…GIVL). His419 is a heme a3 binding site. 3 helical membrane-spanning segments follow: residues 420-440 (FHYV…YFWI), 455-475 (LHFW…HFLG), and 499-519 (LGAF…FYTL). Residue His421 participates in Fe(II)-heme a binding. The tract at residues 543–566 (TSPPPEHTFEQLPKREDWERAPAH) is disordered. Basic and acidic residues predominate over residues 549 to 566 (HTFEQLPKREDWERAPAH).

Belongs to the heme-copper respiratory oxidase family. Cu(2+) serves as cofactor. Requires heme as cofactor.

It is found in the cell membrane. It carries out the reaction 4 Fe(II)-[cytochrome c] + O2 + 8 H(+)(in) = 4 Fe(III)-[cytochrome c] + 2 H2O + 4 H(+)(out). It participates in energy metabolism; oxidative phosphorylation. Its function is as follows. Cytochrome c oxidase is the component of the respiratory chain that catalyzes the reduction of oxygen to water. Subunits 1-3 form the functional core of the enzyme complex. Co I is the catalytic subunit of the enzyme. Electrons originating in cytochrome c are transferred via the copper A center of subunit 2 and heme a of subunit 1 to the bimetallic center formed by heme a3 and copper B. This cytochrome c oxidase shows proton pump activity across the membrane in addition to the electron transfer. The chain is Cytochrome c oxidase subunit 1 (ctaD) from Cereibacter sphaeroides (Rhodobacter sphaeroides).